Here is a 399-residue protein sequence, read N- to C-terminus: DNA replication and repair protein RecF (399 aa).

30-37 is an ATP binding site; that stretch reads GSNGIGKT.

Belongs to the RecF family.

The protein localises to the cytoplasm. Its function is as follows. The RecF protein is involved in DNA metabolism; it is required for DNA replication and normal SOS inducibility. RecF binds preferentially to single-stranded, linear DNA. It also seems to bind ATP. This is DNA replication and repair protein RecF from Paenarthrobacter aurescens (strain TC1).